A 429-amino-acid chain; its full sequence is Adenylosuccinate synthetase (429 aa).

GTP is bound by residues Gly-13–Lys-19 and Gly-41–Thr-43. The Proton acceptor role is filled by Asp-14. Residues Asp-14 and Gly-41 each coordinate Mg(2+). Residues Asp-14 to Lys-17, Asn-39 to His-42, Thr-130, Arg-144, Gln-225, Thr-240, and Arg-304 each bind IMP. The active-site Proton donor is His-42. Ala-300 to Arg-306 contributes to the substrate binding site. GTP-binding positions include Arg-306, Lys-332 to Asp-334, and Ser-413 to Gly-415.

Belongs to the adenylosuccinate synthetase family. Homodimer. The cofactor is Mg(2+).

Its subcellular location is the cytoplasm. The catalysed reaction is IMP + L-aspartate + GTP = N(6)-(1,2-dicarboxyethyl)-AMP + GDP + phosphate + 2 H(+). It functions in the pathway purine metabolism; AMP biosynthesis via de novo pathway; AMP from IMP: step 1/2. In terms of biological role, plays an important role in the de novo pathway of purine nucleotide biosynthesis. Catalyzes the first committed step in the biosynthesis of AMP from IMP. The chain is Adenylosuccinate synthetase from Pseudomonas fluorescens (strain Pf0-1).